Here is a 107-residue protein sequence, read N- to C-terminus: Phosphoribosyl-ATP pyrophosphatase (107 aa).

Belongs to the PRA-PH family.

It localises to the cytoplasm. The enzyme catalyses 1-(5-phospho-beta-D-ribosyl)-ATP + H2O = 1-(5-phospho-beta-D-ribosyl)-5'-AMP + diphosphate + H(+). Its pathway is amino-acid biosynthesis; L-histidine biosynthesis; L-histidine from 5-phospho-alpha-D-ribose 1-diphosphate: step 2/9. This chain is Phosphoribosyl-ATP pyrophosphatase, found in Bacillus cereus (strain Q1).